The following is an 83-amino-acid chain: Mu-theraphotoxin-Hhn2o (83 aa).

An N-terminal signal peptide occupies residues Met1–Ala21. Residues Ser22–Arg48 constitute a propeptide that is removed on maturation. Intrachain disulfides connect Cys50–Cys65, Cys57–Cys70, and Cys64–Cys77. The residue at position 81 (Leu81) is a Leucine amide.

Belongs to the neurotoxin 10 (Hwtx-1) family. 15 (Hntx-3) subfamily. As to quaternary structure, monomer. As to expression, expressed by the venom gland.

The protein localises to the secreted. Its function is as follows. Lethal neurotoxin. Selectively blocks tetrodotoxin-sensitive voltage-gated sodium channels (Nav). Does not affect tetrodotoxin-resistant voltage-gated sodium channels or calcium channels. The chain is Mu-theraphotoxin-Hhn2o from Cyriopagopus hainanus (Chinese bird spider).